A 296-amino-acid chain; its full sequence is Formamidopyrimidine-DNA glycosylase (296 aa).

P2 serves as the catalytic Schiff-base intermediate with DNA. E3 acts as the Proton donor in catalysis. Residue K58 is the Proton donor; for beta-elimination activity of the active site. DNA-binding residues include H104, R126, and K169. An FPG-type zinc finger spans residues 260 to 296; it reads SVYDREGQACGTPGCGGTVARIVQAGRSTFYCAACQK. The active-site Proton donor; for delta-elimination activity is R286.

Belongs to the FPG family. As to quaternary structure, monomer. Zn(2+) is required as a cofactor.

It carries out the reaction Hydrolysis of DNA containing ring-opened 7-methylguanine residues, releasing 2,6-diamino-4-hydroxy-5-(N-methyl)formamidopyrimidine.. It catalyses the reaction 2'-deoxyribonucleotide-(2'-deoxyribose 5'-phosphate)-2'-deoxyribonucleotide-DNA = a 3'-end 2'-deoxyribonucleotide-(2,3-dehydro-2,3-deoxyribose 5'-phosphate)-DNA + a 5'-end 5'-phospho-2'-deoxyribonucleoside-DNA + H(+). Involved in base excision repair of DNA damaged by oxidation or by mutagenic agents. Acts as a DNA glycosylase that recognizes and removes damaged bases. Has a preference for oxidized purines, such as 7,8-dihydro-8-oxoguanine (8-oxoG). Has AP (apurinic/apyrimidinic) lyase activity and introduces nicks in the DNA strand. Cleaves the DNA backbone by beta-delta elimination to generate a single-strand break at the site of the removed base with both 3'- and 5'-phosphates. The chain is Formamidopyrimidine-DNA glycosylase from Rhizobium etli (strain ATCC 51251 / DSM 11541 / JCM 21823 / NBRC 15573 / CFN 42).